The sequence spans 722 residues: Bifunctional UDP-N-acetylglucosamine 2-epimerase/N-acetylmannosamine kinase (722 aa).

The UDP site is built by Arg-19, Ser-23, Arg-113, His-220, and Asn-253. CMP-N-acetyl-beta-neuraminate is bound by residues Lys-259, Glu-271, Lys-280, and His-281. Positions 282, 301, 302, 307, and 321 each coordinate UDP. The interval 406–722 (TLSALAVDLG…VLDYTTRRIH (317 aa)) is N-acetylmannosamine kinase. Asp-413 provides a ligand contact to Mg(2+). Residue Gly-416 coordinates an N-acyl-D-mannosamine 6-phosphate. Residues Thr-417, Asn-418, and Arg-420 each coordinate ADP. An N-acyl-D-mannosamine 6-phosphate is bound by residues Gly-476, Arg-477, Thr-489, Asn-516, Asp-517, and Gly-545. Residues Gly-476, Arg-477, Thr-489, Asn-516, and Asp-517 each contribute to the an N-acyl-D-mannosamine site. Residue Asp-517 is part of the active site. Glu-566 and His-569 together coordinate an N-acyl-D-mannosamine. His-569 is a binding site for an N-acyl-D-mannosamine 6-phosphate. Zn(2+)-binding residues include His-569, Cys-579, Cys-581, and Cys-586. Glu-588 serves as a coordination point for an N-acyl-D-mannosamine 6-phosphate. Position 588 (Glu-588) interacts with an N-acyl-D-mannosamine.

It in the N-terminal section; belongs to the UDP-N-acetylglucosamine 2-epimerase family. This sequence in the C-terminal section; belongs to the ROK (NagC/XylR) family. As to quaternary structure, homodimer. Homotetramer. Homohexamer. The hexameric form exhibits both enzyme activities, whereas the dimeric form only catalyzes the phosphorylation of N-acyl-D-mannosamine. Phosphorylated. Phosphorylation by PKC activates the UDP-N-acetylglucosamine 2-epimerase activity. In terms of tissue distribution, widely expressed. Highest expression in liver. Also found at high levels in lung, brain and kidney.

It is found in the cytoplasm. The protein localises to the cytosol. It catalyses the reaction UDP-N-acetyl-alpha-D-glucosamine + H2O = aldehydo-N-acetyl-D-mannosamine + UDP + H(+). It carries out the reaction an N-acyl-D-mannosamine + ATP = an N-acyl-D-mannosamine 6-phosphate + ADP + H(+). Its pathway is amino-sugar metabolism; N-acetylneuraminate biosynthesis. The UDP-N-acetylglucosamine 2-epimerase activity, in contrast to the N-acetylmannosamine kinase activity, exhibits allosteric regulation by cytidine monophosphate-N-acetylneuraminic acid (CMP-Neu5Ac), the end product of neuraminic acid biosynthesis. Moreover, the activity is contingent upon the oligomeric state of the enzyme. The monomeric form is inactive, while the dimeric form selectively catalyzes the phosphorylation of N-acetylmannosamine. The hexameric form, on the other hand, demonstrates full proficiency in both enzyme activities. Furthermore, the UDP-N-acetylglucosamine 2-epimerase activity is increased by PKC-mediated phosphorylation. Bifunctional enzyme that possesses both UDP-N-acetylglucosamine 2-epimerase and N-acetylmannosamine kinase activities, and serves as the initiator of the biosynthetic pathway leading to the production of N-acetylneuraminic acid (NeuAc), a critical precursor in the synthesis of sialic acids. By catalyzing this pivotal and rate-limiting step in sialic acid biosynthesis, this enzyme assumes a pivotal role in governing the regulation of cell surface sialylation, playing a role in embryonic angiogenesis. Sialic acids represent a category of negatively charged sugars that reside on the surface of cells as terminal components of glycoconjugates and mediate important functions in various cellular processes, including cell adhesion, signal transduction, and cellular recognition. The protein is Bifunctional UDP-N-acetylglucosamine 2-epimerase/N-acetylmannosamine kinase of Mus musculus (Mouse).